We begin with the raw amino-acid sequence, 487 residues long: Betaine aldehyde dehydrogenase (487 aa).

2 residues coordinate K(+): Ser-26 and Asp-93. 150–152 is a binding site for NAD(+); the sequence is GAW. Catalysis depends on Lys-162, which acts as the Charge relay system. NAD(+) is bound by residues 176–179 and 229–232; these read KPSE and SVPT. Leu-244 provides a ligand contact to K(+). Glu-250 functions as the Proton acceptor in the catalytic mechanism. NAD(+) contacts are provided by Gly-252, Cys-284, and Glu-384. Cys-284 functions as the Nucleophile in the catalytic mechanism. Cys-284 is subject to Cysteine sulfenic acid (-SOH). Residues Lys-454 and Gly-457 each contribute to the K(+) site. The active-site Charge relay system is the Glu-461.

It belongs to the aldehyde dehydrogenase family. As to quaternary structure, dimer of dimers. It depends on K(+) as a cofactor.

The catalysed reaction is betaine aldehyde + NAD(+) + H2O = glycine betaine + NADH + 2 H(+). It functions in the pathway amine and polyamine biosynthesis; betaine biosynthesis via choline pathway; betaine from betaine aldehyde: step 1/1. Its function is as follows. Involved in the biosynthesis of the osmoprotectant glycine betaine. Catalyzes the irreversible oxidation of betaine aldehyde to the corresponding acid. This is Betaine aldehyde dehydrogenase from Rhizobium leguminosarum bv. trifolii (strain WSM2304).